The sequence spans 723 residues: Fatty acid oxidation complex subunit alpha (723 aa).

An enoyl-CoA hydratase/isomerase region spans residues 1 to 189 (MIYQAETLQV…KIGLLDAVVD (189 aa)). A substrate-binding site is contributed by Asp296. The segment at 311–723 (SKDTQRAAVL…FYGAQQQGSI (413 aa)) is 3-hydroxyacyl-CoA dehydrogenase. Residues Met325, Asp344, 401 to 403 (VVE), Lys408, and Ser430 each bind NAD(+). Catalysis depends on His451, which acts as the For 3-hydroxyacyl-CoA dehydrogenase activity. Residue Asn454 participates in NAD(+) binding. 2 residues coordinate substrate: Asn501 and Tyr661.

The protein in the N-terminal section; belongs to the enoyl-CoA hydratase/isomerase family. In the C-terminal section; belongs to the 3-hydroxyacyl-CoA dehydrogenase family. Heterotetramer of two alpha chains (FadB) and two beta chains (FadA).

It catalyses the reaction a (3S)-3-hydroxyacyl-CoA + NAD(+) = a 3-oxoacyl-CoA + NADH + H(+). The catalysed reaction is a (3S)-3-hydroxyacyl-CoA = a (2E)-enoyl-CoA + H2O. The enzyme catalyses a 4-saturated-(3S)-3-hydroxyacyl-CoA = a (3E)-enoyl-CoA + H2O. It carries out the reaction (3S)-3-hydroxybutanoyl-CoA = (3R)-3-hydroxybutanoyl-CoA. It catalyses the reaction a (3Z)-enoyl-CoA = a 4-saturated (2E)-enoyl-CoA. The catalysed reaction is a (3E)-enoyl-CoA = a 4-saturated (2E)-enoyl-CoA. It participates in lipid metabolism; fatty acid beta-oxidation. In terms of biological role, involved in the aerobic and anaerobic degradation of long-chain fatty acids via beta-oxidation cycle. Catalyzes the formation of 3-oxoacyl-CoA from enoyl-CoA via L-3-hydroxyacyl-CoA. It can also use D-3-hydroxyacyl-CoA and cis-3-enoyl-CoA as substrate. This Vibrio campbellii (strain ATCC BAA-1116) protein is Fatty acid oxidation complex subunit alpha.